A 361-amino-acid chain; its full sequence is Glutaminyl-peptide cyclotransferase (361 aa).

Positions 1-28 (MAGGRHRRVVGTLHLLLLVAALPWASRG) are cleaved as a signal peptide. Residue Asn49 is glycosylated (N-linked (GlcNAc...) asparagine). Cysteines 139 and 164 form a disulfide. Position 159 (Asp159) interacts with Zn(2+). The Proton acceptor role is filled by Glu201. Residue Glu202 participates in Zn(2+) binding. Catalysis depends on Asp248, which acts as the Proton acceptor. Asn296 carries N-linked (GlcNAc...) asparagine glycosylation. His330 contributes to the Zn(2+) binding site.

It belongs to the glutaminyl-peptide cyclotransferase family.

Its subcellular location is the secreted. It carries out the reaction N-terminal L-glutaminyl-[peptide] = N-terminal 5-oxo-L-prolyl-[peptide] + NH4(+). Functionally, responsible for the biosynthesis of pyroglutamyl peptides. Has a bias against acidic and tryptophan residues adjacent to the N-terminal glutaminyl residue and a lack of importance of chain length after the second residue. Also catalyzes N-terminal pyroglutamate formation. In vitro, catalyzes pyroglutamate formation of N-terminally truncated form of APP amyloid-beta peptides [Glu-3]-amyloid-beta. May be involved in the N-terminal pyroglutamate formation of several amyloid-related plaque-forming peptides. This chain is Glutaminyl-peptide cyclotransferase (QPCT), found in Homo sapiens (Human).